The primary structure comprises 152 residues: Transcriptional regulator MraZ (152 aa).

SpoVT-AbrB domains follow at residues 5–52 (ATLV…TLPE) and 81–124 (ASEC…DETT).

Belongs to the MraZ family. As to quaternary structure, forms oligomers.

It localises to the cytoplasm. It is found in the nucleoid. Its function is as follows. Negatively regulates its own expression and that of the subsequent genes in the proximal part of the division and cell wall (dcw) gene cluster. Acts by binding directly to DNA. May also regulate the expression of genes outside the dcw cluster. The sequence is that of Transcriptional regulator MraZ from Enterobacter sp. (strain 638).